The sequence spans 326 residues: UDP-3-O-acylglucosamine N-acyltransferase (326 aa).

His-233 serves as the catalytic Proton acceptor.

This sequence belongs to the transferase hexapeptide repeat family. LpxD subfamily. In terms of assembly, homotrimer.

It catalyses the reaction a UDP-3-O-[(3R)-3-hydroxyacyl]-alpha-D-glucosamine + a (3R)-hydroxyacyl-[ACP] = a UDP-2-N,3-O-bis[(3R)-3-hydroxyacyl]-alpha-D-glucosamine + holo-[ACP] + H(+). It participates in bacterial outer membrane biogenesis; LPS lipid A biosynthesis. Functionally, catalyzes the N-acylation of UDP-3-O-acylglucosamine using 3-hydroxyacyl-ACP as the acyl donor. Is involved in the biosynthesis of lipid A, a phosphorylated glycolipid that anchors the lipopolysaccharide to the outer membrane of the cell. This chain is UDP-3-O-acylglucosamine N-acyltransferase, found in Aquifex aeolicus (strain VF5).